Reading from the N-terminus, the 512-residue chain is 2-isopropylmalate synthase (512 aa).

Residues I4–K266 enclose the Pyruvate carboxyltransferase domain. Positions 13, 201, 203, and 237 each coordinate Mn(2+). The tract at residues E390–K512 is regulatory domain.

This sequence belongs to the alpha-IPM synthase/homocitrate synthase family. LeuA type 1 subfamily. In terms of assembly, homodimer. Mn(2+) is required as a cofactor.

It is found in the cytoplasm. It catalyses the reaction 3-methyl-2-oxobutanoate + acetyl-CoA + H2O = (2S)-2-isopropylmalate + CoA + H(+). It functions in the pathway amino-acid biosynthesis; L-leucine biosynthesis; L-leucine from 3-methyl-2-oxobutanoate: step 1/4. Catalyzes the condensation of the acetyl group of acetyl-CoA with 3-methyl-2-oxobutanoate (2-ketoisovalerate) to form 3-carboxy-3-hydroxy-4-methylpentanoate (2-isopropylmalate). The polypeptide is 2-isopropylmalate synthase (Listeria welshimeri serovar 6b (strain ATCC 35897 / DSM 20650 / CCUG 15529 / CIP 8149 / NCTC 11857 / SLCC 5334 / V8)).